A 908-amino-acid polypeptide reads, in one-letter code: 26S proteasome non-ATPase regulatory subunit 2 (908 aa).

Position 1 is an N-acetylmethionine (Met1). The disordered stretch occupies residues 1-51 (MEEGGRDKTPVQSQQPSATTPSGADEKSSGKERRDAGEKDKEQELSEEDKQ). Thr9 and Thr20 each carry phosphothreonine. The segment covering 10 to 22 (PVQSQQPSATTPS) has biased composition (polar residues). Positions 24–51 (ADEKSSGKERRDAGEKDKEQELSEEDKQ) are enriched in basic and acidic residues. 2 positions are modified to phosphoserine: Ser29 and Ser147. Tyr194 carries the phosphotyrosine modification. Phosphoserine is present on residues Ser361 and Ser363. PC repeat units follow at residues 409 to 442 (SAAASLGMILLWDVDGGLTQIDKYLYSSEDYIKS), 443 to 479 (GALLACGIVNSGVRNECDPALALLSDYVLHNSNTMRL), 480 to 514 (GSIFGLGLAYAGSNREDVLTLLLPVMGDSKSSMEV), 517 to 551 (VTALACGMIAVGSCNGDVTSTILQTIMEKSETELK), and 560 to 589 (LGLGLNHLGKGEAIEAILAALEVVSEPFRS). Lys551 carries the N6-acetyllysine modification. The segment covering 623–643 (KEKEEDKDKKEKKDKDKKEAP) has biased composition (basic and acidic residues). The tract at residues 623-645 (KEKEEDKDKKEKKDKDKKEAPAD) is disordered. 2 PC repeats span residues 692 to 723 (LALALISVSNPRLNILDTLSKFSHDADPEVSY) and 742 to 757 (AAMLRQLAQYHAKDPN). The required for interaction with UBLCP1 stretch occupies residues 708–903 (DTLSKFSHDA…LEGFVILRKN (196 aa)).

It belongs to the proteasome subunit S2 family. Component of the 19S proteasome regulatory particle complex. The 26S proteasome consists of a 20S core particle (CP) and two 19S regulatory subunits (RP). The regulatory particle is made of a lid composed of 9 subunits, a base containing 6 ATPases and few additional components including PSMD2. Interacts with RPGRIP1L. Interacts with CRY1 in a KDM8-dependent manner. Interacts (via C-terminus) with phosphatase UBLCP1 (via ubiquitin-like domain); the interaction recruits UBLCP1 to the 19S regulatory particle where it dephosphorylates 19S subunit PSMC2/RPT1 which impairs PSMC2 ATPase activity and disrupts 26S proteasome assembly.

In terms of biological role, component of the 26S proteasome, a multiprotein complex involved in the ATP-dependent degradation of ubiquitinated proteins. This complex plays a key role in the maintenance of protein homeostasis by removing misfolded or damaged proteins, which could impair cellular functions, and by removing proteins whose functions are no longer required. Therefore, the proteasome participates in numerous cellular processes, including cell cycle progression, apoptosis, or DNA damage repair. Functionally, binds to the intracellular domain of tumor necrosis factor type 1 receptor. The binding domain of TRAP1 and TRAP2 resides outside the death domain of TNFR1. The protein is 26S proteasome non-ATPase regulatory subunit 2 (Psmd2) of Mus musculus (Mouse).